Here is a 331-residue protein sequence, read N- to C-terminus: Protein RecA (331 aa).

61-68 (GPESSGKT) contributes to the ATP binding site.

This sequence belongs to the RecA family.

The protein resides in the cytoplasm. Can catalyze the hydrolysis of ATP in the presence of single-stranded DNA, the ATP-dependent uptake of single-stranded DNA by duplex DNA, and the ATP-dependent hybridization of homologous single-stranded DNAs. It interacts with LexA causing its activation and leading to its autocatalytic cleavage. This Mycoplasma mobile (strain ATCC 43663 / 163K / NCTC 11711) (Mesomycoplasma mobile) protein is Protein RecA.